The following is a 229-amino-acid chain: PKHD-type hydroxylase BRADO6316 (229 aa).

In terms of domain architecture, Fe2OG dioxygenase spans 78-180 (QIFPPLFNRY…RVASFFWLQS (103 aa)). Residues H98, D100, and H161 each coordinate Fe cation. Residue R171 coordinates 2-oxoglutarate.

The cofactor is Fe(2+). L-ascorbate is required as a cofactor.

The polypeptide is PKHD-type hydroxylase BRADO6316 (Bradyrhizobium sp. (strain ORS 278)).